A 325-amino-acid polypeptide reads, in one-letter code: Formimidoylglutamase (325 aa).

Residues histidine 125, aspartate 155, histidine 157, aspartate 159, cysteine 246, and aspartate 248 each contribute to the Mn(2+) site.

This sequence belongs to the arginase family. Mn(2+) is required as a cofactor.

It catalyses the reaction N-formimidoyl-L-glutamate + H2O = formamide + L-glutamate. Its pathway is amino-acid degradation; L-histidine degradation into L-glutamate; L-glutamate from N-formimidoyl-L-glutamate (hydrolase route): step 1/1. Its function is as follows. Catalyzes the conversion of N-formimidoyl-L-glutamate to L-glutamate and formamide. The chain is Formimidoylglutamase from Ralstonia nicotianae (strain ATCC BAA-1114 / GMI1000) (Ralstonia solanacearum).